The following is a 345-amino-acid chain: Phosphoribosylformylglycinamidine cyclo-ligase (345 aa).

The protein belongs to the AIR synthase family.

Its subcellular location is the cytoplasm. The enzyme catalyses 2-formamido-N(1)-(5-O-phospho-beta-D-ribosyl)acetamidine + ATP = 5-amino-1-(5-phospho-beta-D-ribosyl)imidazole + ADP + phosphate + H(+). It participates in purine metabolism; IMP biosynthesis via de novo pathway; 5-amino-1-(5-phospho-D-ribosyl)imidazole from N(2)-formyl-N(1)-(5-phospho-D-ribosyl)glycinamide: step 2/2. The polypeptide is Phosphoribosylformylglycinamidine cyclo-ligase (Staphylococcus carnosus (strain TM300)).